The primary structure comprises 258 residues: 6-carboxyhexanoate--CoA ligase (258 aa).

Belongs to the BioW family. In terms of assembly, homodimer. Requires Mg(2+) as cofactor.

It catalyses the reaction heptanedioate + ATP + CoA = 6-carboxyhexanoyl-CoA + AMP + diphosphate. It participates in metabolic intermediate metabolism; pimeloyl-CoA biosynthesis; pimeloyl-CoA from pimelate: step 1/1. In terms of biological role, catalyzes the transformation of pimelate into pimeloyl-CoA with concomitant hydrolysis of ATP to AMP. The sequence is that of 6-carboxyhexanoate--CoA ligase from Bacillus subtilis (strain BSn5).